A 7763-amino-acid chain; its full sequence is Nonribosomal peptide synthetase agiA (7763 aa).

The segment at 20-168 (APSVMQEEMI…DGWSARALLE (149 aa)) is condensation 1. An adenylation 1 region spans residues 469–866 (EQAASKWPSK…GRADGQIKLR (398 aa)). Residues 995–1071 (LPESPAERLL…DVARAMSPSS (77 aa)) enclose the Carrier 1 domain. Serine 1032 is subject to O-(pantetheine 4'-phosphoryl)serine. The interval 1104–1526 (IYPCTPQQEG…GLSDQKLITG (423 aa)) is condensation 2. Residues 1562 to 1968 (FEMQADMTPQ…GRIDSQIKLR (407 aa)) are adenylation 2. Positions 2090 to 2166 (WEQGSIEDKI…SQAKCATSHT (77 aa)) constitute a Carrier 2 domain. Residue serine 2127 is modified to O-(pantetheine 4'-phosphoryl)serine. The epimerase (E) stretch occupies residues 2212 to 2556 (DHFNQSVLLD…IMPLVFNYQG (345 aa)). The segment at 2676–3016 (DIIPCTPMQR…PALVNTLLNF (341 aa)) is condensation 3. The segment at 3136 to 3531 (WAAQVPEKVA…GRMDDQIKIR (396 aa)) is adenylation 3. Residues 3667 to 3743 (GPESPTEIML…ELATILNTSY (77 aa)) enclose the Carrier 3 domain. Position 3704 is an O-(pantetheine 4'-phosphoryl)serine (serine 3704). Positions 3789 to 4238 (VMPCTPFQEG…ISQSIDALVQ (450 aa)) are condensation 4. Residues 4321–4687 (VGSQQPIIPI…GRFDRQIKIR (367 aa)) are adenylation 4. Positions 4806-4880 (APTTEREKVI…DLARQLESTA (75 aa)) constitute a Carrier 4 domain. Position 4840 is an O-(pantetheine 4'-phosphoryl)serine (serine 4840). Positions 4902–5339 (SFAQGRLWFL…ALLNDLSMHD (438 aa)) are condensation 5. The interval 5361-5765 (FRQEARSHPD…GRRDDQVKIR (405 aa)) is adenylation 5. An S-adenosyl-L-methionine-dependent N-methyltransferase region spans residues 5820 to 5975 (DAWKNVFDTE…YLSEIVQKLV (156 aa)). The region spanning 6306-6381 (EYGSEMERIL…RLADRLLSKQ (76 aa)) is the Carrier 5 domain. Residue serine 6341 is modified to O-(pantetheine 4'-phosphoryl)serine. The disordered stretch occupies residues 6378-6399 (LSKQSDSNTEANTSTDGKTQHS). Polar residues predominate over residues 6379–6399 (SKQSDSNTEANTSTDGKTQHS). A condensation 6 region spans residues 6424–6883 (MPCTPFQEGV…TVGDAEEAAL (460 aa)). Residues 6913 to 7327 (RQAMESPCKI…GRMDSQVKLR (415 aa)) form an adenylation 6 region. Positions 7446–7522 (PSPGTLEATL…SQAFRILCDV (77 aa)) constitute a Carrier 6 domain. Serine 7483 carries the post-translational modification O-(pantetheine 4'-phosphoryl)serine. Residues 7542 to 7638 (TMVLIHPFFG…TGKGSPFSTV (97 aa)) are thioesterase (TE).

This sequence belongs to the NRP synthetase family.

Functionally, nonribosomal peptide synthetase; part of the gene cluster that mediates the biosynthesis of the aspergillicins A and F, 2 cryptic cyclic hexa-depsipeptides. The hexamodular NRPS agiA catalyzes the condensation of the six amino acid residues including N-Me-L-O-Me-tyrosine, L-proline 1, L-proline 2, D-isoleucine, O-acetyl-threonine, and L-isoleucine. The starting condensation domain (C1) of agiA probably loads acetyl-CoA which is condensed on the N-terminus of threonine by the first module to yield O-acetyl-threonine. The second module then loads L-isoleucine. The epimerase (E) domain on module 2 is probably involved in the formation of the D-isoleucine moiety. Modules 3 and 4 further load 2 successive L-prolines. Module 5 is then involved in the condensation of O-Me-L-tyrosine produced by the O-methyltransferase agiB and the N-methyl transferase (NMeT) domain on module 5 probably catalyzes the N-methylation to yield the N-Me-L-O-Me-tyrosine moiety. The A domain of module 5 loads preferentially O-Me-L-tyrosine, but it can also accept L-phenylalanine, which leads to the production of aspergillicin G. Module 6 then loads the last residue, L-isoleucine. The C-terminal thiolesterase (TE) domain probably cyclizes the peptide using the hydroxy group from threonine to form the cyclic depsipeptide. In Aspergillus flavus (strain ATCC 200026 / FGSC A1120 / IAM 13836 / NRRL 3357 / JCM 12722 / SRRC 167), this protein is Nonribosomal peptide synthetase agiA.